The primary structure comprises 374 residues: MATPDGEQVWAQLQPQDRAWLNDLSRRAGPDTELALVGGAVRDALLGQTPLDLDIVVAGQDGQGVEALALASGLPFVFHPAFENATLTLPDGRGADLVRARREHYPQPGRNPEPLPGTLHDDLRRRDFGLNALALRLREDGAPELLDVVGGLRDLERRELRPLHDRSLHEDASRLVRAARLAARLELHPAPELLAQVPDALALADDTPRLWAELKLLLAEPRPGQAARVLDGWGAGTLLPGLPLLEALDVQQNAGTPVQPGTYAAAVLSAAPDAAALAERMALGERPAALLARALSDSYFAPGTPELQLRGLLRPESYLPLTGREVVALGVAPGPAVGRALAHLAGLRQSGAVRSADEERTALRAYLGANPKAT.

39–42 is a CTP binding site; the sequence is GAVR. The Mg(2+) site is built by Asp52 and Asp54. Residues 126–127, Asn131, 171–180, and Arg209 contribute to the CTP site; these read RD and DASRLVRAAR.

This sequence belongs to the tRNA nucleotidyltransferase/poly(A) polymerase family. Mg(2+) serves as cofactor.

The catalysed reaction is a tRNA precursor + 2 CTP = a tRNA with a 3' CC end + 2 diphosphate. Its function is as follows. tRNA nucleotidyltransferase involved in the synthesis of the tRNA CCA terminus. Adds the two cytidine residues to tRNA. The chain is CC-adding tRNA nucleotidyltransferase from Deinococcus radiodurans (strain ATCC 13939 / DSM 20539 / JCM 16871 / CCUG 27074 / LMG 4051 / NBRC 15346 / NCIMB 9279 / VKM B-1422 / R1).